The sequence spans 795 residues: Forkhead box protein P4 (795 aa).

Positions 1 to 25 are enriched in polar residues; it reads MMVESASETIRSAPSGQNGVGSLSA. The disordered stretch occupies residues 1–62; it reads MMVESASETI…SGGADSNGEM (62 aa). The span at 36–45 shows a compositional bias: low complexity; sequence AGTAPAAGRD. A phosphoserine mark is found at Ser58 and Ser92. A Glycyl lysine isopeptide (Lys-Gly) (interchain with G-Cter in SUMO2) cross-link involves residue Lys181. Disordered regions lie at residues 233–252 and 265–310; these read PQLW…SGRQ and TSFA…PLYG. Basic and acidic residues predominate over residues 292-303; it reads SRRDSSSHEETP. The C2H2-type zinc-finger motif lies at 312-337; it reads GECKWPGCETLCEDLGQFIKHLNTEH. The leucine-zipper stretch occupies residues 354–375; the sequence is VQQLEIQLAKESERLQAMMAHL. The tract at residues 379 to 437 is disordered; the sequence is PSEPKPFSQPVTVSADPFPDGLVHPPTSAAAPVTPLRPPGLGSASLHSGGPARRRSNDK. Lys383 participates in a covalent cross-link: Glycyl lysine isopeptide (Lys-Gly) (interchain with G-Cter in SUMO2). The segment at residues 459 to 549 is a DNA-binding region (fork-head); it reads RPPFTYASLI…PPKMTGSPTL (91 aa). Phosphoserine is present on Ser546. Residues 589–671 form a disordered region; the sequence is ASSLLPLSQE…LEEDLGGEDM (83 aa). Polar residues predominate over residues 609–627; sequence SNGSSSPPRLSPPQYSHQI. Residues 628-642 are compositionally biased toward basic and acidic residues; it reads QVKEEPAEAEEDRRP.

Forms homodimers and heterodimers with FOXP1 and FOXP2. Dimerization is required for DNA-binding. In terms of tissue distribution, expressed in the adult heart, brain, spleen lung, liver, kidney and testes.

It is found in the nucleus. Transcriptional repressor that represses lung-specific expression. The sequence is that of Forkhead box protein P4 from Mus musculus (Mouse).